A 448-amino-acid polypeptide reads, in one-letter code: UDP-N-acetylmuramoylalanine--D-glutamate ligase (448 aa).

112–118 (GSNAKST) is a binding site for ATP.

It belongs to the MurCDEF family.

Its subcellular location is the cytoplasm. It carries out the reaction UDP-N-acetyl-alpha-D-muramoyl-L-alanine + D-glutamate + ATP = UDP-N-acetyl-alpha-D-muramoyl-L-alanyl-D-glutamate + ADP + phosphate + H(+). The protein operates within cell wall biogenesis; peptidoglycan biosynthesis. Functionally, cell wall formation. Catalyzes the addition of glutamate to the nucleotide precursor UDP-N-acetylmuramoyl-L-alanine (UMA). This is UDP-N-acetylmuramoylalanine--D-glutamate ligase from Acinetobacter baylyi (strain ATCC 33305 / BD413 / ADP1).